Consider the following 335-residue polypeptide: NADP(+)-dependent glycerol-3-phosphate dehydrogenase (335 aa).

Residue G137 participates in sn-glycerol 3-phosphate binding. Residue A141 coordinates NADPH. Residues K192, D250, R259, and N260 each contribute to the sn-glycerol 3-phosphate site. The Proton acceptor role is filled by K192. Residue R259 participates in NADPH binding. NADPH-binding residues include V287 and E289.

The protein belongs to the NAD-dependent glycerol-3-phosphate dehydrogenase family. As to quaternary structure, homodimer.

It is found in the cytoplasm. The enzyme catalyses sn-glycerol 3-phosphate + NADP(+) = dihydroxyacetone phosphate + NADPH + H(+). Its function is as follows. Catalyzes the reduction of the glycolytic intermediate dihydroxyacetone phosphate (DHAP) to sn-glycerol 3-phosphate (G3P). Shows a 15-fold preference for NADPH over NADH in the reduction process. Can also catalyze the reverse reaction in vitro. Shows no activity with dihydroxyacetone, glycerol, glycerol-2-phosphate, D-glyceraldehyde-3-phosphate, DL-glyceraldehyde, D-erythrose-4-phosphate, D-fructose-6-phosphate, beta-D-glucose-6-phosphate, or alpha-D-galactose-1-phosphate. The polypeptide is NADP(+)-dependent glycerol-3-phosphate dehydrogenase (Archaeoglobus fulgidus (strain ATCC 49558 / DSM 4304 / JCM 9628 / NBRC 100126 / VC-16)).